Here is a 148-residue protein sequence, read N- to C-terminus: Sec-independent protein translocase protein TatB (148 aa).

Residues 2–22 (FNDIGPLELVTLVVLAVLVFG) form a helical membrane-spanning segment. Basic and acidic residues-rich tracts occupy residues 100–110 (VTDAVHGRESE) and 128–148 (MTKK…ADAT). Positions 100–148 (VTDAVHGRESETSASSSSANGSAGGTVDMTKKREQLEADERPPFDADAT) are disordered.

The protein belongs to the TatB family. In terms of assembly, the Tat system comprises two distinct complexes: a TatABC complex, containing multiple copies of TatA, TatB and TatC subunits, and a separate TatA complex, containing only TatA subunits. Substrates initially bind to the TatABC complex, which probably triggers association of the separate TatA complex to form the active translocon.

It is found in the cell membrane. Part of the twin-arginine translocation (Tat) system that transports large folded proteins containing a characteristic twin-arginine motif in their signal peptide across membranes. Together with TatC, TatB is part of a receptor directly interacting with Tat signal peptides. TatB may form an oligomeric binding site that transiently accommodates folded Tat precursor proteins before their translocation. The polypeptide is Sec-independent protein translocase protein TatB (Streptomyces avermitilis (strain ATCC 31267 / DSM 46492 / JCM 5070 / NBRC 14893 / NCIMB 12804 / NRRL 8165 / MA-4680)).